The chain runs to 1306 residues: DNA-directed RNA polymerase subunit beta' (1306 aa).

Cys-214, Cys-285, Cys-292, and Cys-295 together coordinate Zn(2+). Disordered regions lie at residues 1234-1263 (LDNGEDSLNNRYGQGERDNNNSDKKPPNRL) and 1281-1306 (IARAYTEADPPWSVESKQEKDDDDDK). Positions 1247–1259 (QGERDNNNSDKKP) are enriched in basic and acidic residues.

The protein belongs to the RNA polymerase beta' chain family. RpoC2 subfamily. As to quaternary structure, in cyanobacteria the RNAP catalytic core is composed of 2 alpha, 1 beta, 1 beta', 1 gamma and 1 omega subunit. When a sigma factor is associated with the core the holoenzyme is formed, which can initiate transcription. Zn(2+) serves as cofactor.

It catalyses the reaction RNA(n) + a ribonucleoside 5'-triphosphate = RNA(n+1) + diphosphate. Its function is as follows. DNA-dependent RNA polymerase catalyzes the transcription of DNA into RNA using the four ribonucleoside triphosphates as substrates. In Crocosphaera subtropica (strain ATCC 51142 / BH68) (Cyanothece sp. (strain ATCC 51142)), this protein is DNA-directed RNA polymerase subunit beta'.